A 248-amino-acid polypeptide reads, in one-letter code: MKLNVSYPATGCQKLFEVNDEHKLRVFYEKHMGQVVEADILGDEWKGYMLRISGGNDKQGFPMKQGVLTHDRVRLLLKKGHSCYRPRRTGERKRKSVRGCIVDANMSVLALVIVKKGEKDIPGLTDTSVPRRLGPKRASKIRKLYNLSKVDDVRPYVIRRPLPAKDNKKAISKAPKIQRLITPVVLQRKRRRIALKKKRQAASKEAAADYAKLLAQRKKESKAKREEAKRRRSASMRESKSSISSDKK.

Residues 213-248 (LLAQRKKESKAKREEAKRRRSASMRESKSSISSDKK) form a disordered region. Positions 223–248 (AKREEAKRRRSASMRESKSSISSDKK) are enriched in basic and acidic residues.

The protein belongs to the eukaryotic ribosomal protein eS6 family. In terms of assembly, component of the small ribosomal subunit. Part of the small subunit (SSU) processome, composed of more than 70 proteins and the RNA chaperone small nucleolar RNA (snoRNA) U3. In terms of processing, ribosomal protein S6 is the major substrate of protein kinases in eukaryote ribosomes.

The protein localises to the cytoplasm. Its subcellular location is the nucleus. The protein resides in the nucleolus. In terms of biological role, component of the 40S small ribosomal subunit. Plays an important role in controlling cell growth and proliferation through the selective translation of particular classes of mRNA. Part of the small subunit (SSU) processome, first precursor of the small eukaryotic ribosomal subunit. During the assembly of the SSU processome in the nucleolus, many ribosome biogenesis factors, an RNA chaperone and ribosomal proteins associate with the nascent pre-rRNA and work in concert to generate RNA folding, modifications, rearrangements and cleavage as well as targeted degradation of pre-ribosomal RNA by the RNA exosome. The polypeptide is Small ribosomal subunit protein eS6 (RpS6) (Glossina morsitans morsitans (Savannah tsetse fly)).